The following is a 278-amino-acid chain: Proline-rich 28 kDa antigen homolog (278 aa).

An N-terminal signal peptide occupies residues 1 to 28 (MIQSTQTWRVLAGGLAATAMGVTVFAGG).

To M.tuberculosis Rv0040c.

The protein is Proline-rich 28 kDa antigen homolog of Mycobacterium leprae (strain TN).